A 687-amino-acid polypeptide reads, in one-letter code: TWiK family of potassium channels protein 12 (687 aa).

The Cytoplasmic segment spans residues 1–21; sequence MTLFQKLQWFCQLIRLRAYYK. A helical transmembrane segment spans residues 22-42; that stretch reads FLLLIAYTLFGAWLFRFYELQ. Residues Asn53, Asn77, and Asn98 are each glycosylated (N-linked (GlcNAc...) asparagine). Residues 112 to 132 constitute an intramembrane region (pore-forming); it reads WTWTGAMFYAGQLYTTIGYGY. The chain crosses the membrane as a helical span at residues 142–162; the sequence is ICTVLYALFGIPCFLMYLKAI. At 163-212 the chain is on the cytoplasmic side; sequence GKTLSKRLKKIYKRVRRSAFGKFLLPTRVTATKDGFEDPDASAEERKRKP. Residues 213–233 form a helical membrane-spanning segment; that stretch reads FPIPIAIILLIIWICFSASMF. Residues 242 to 262 constitute an intramembrane region (pore-forming); it reads FPSAVYFFIVSISTVGLGDML. A helical transmembrane segment spans residues 270 to 290; it reads VFNFLLILFGLALLSMCFELI. Residues 291 to 687 are Cytoplasmic-facing; sequence TDRIAKWKQK…SKRDAPVNIV (397 aa). Residues 661-687 form a disordered region; that stretch reads SPSTSTSTSMIDSGYDLSKRDAPVNIV. Residues 677–687 are compositionally biased toward basic and acidic residues; sequence LSKRDAPVNIV.

Belongs to the two pore domain potassium channel (TC 1.A.1.8) family.

The protein localises to the membrane. The sequence is that of TWiK family of potassium channels protein 12 from Caenorhabditis briggsae.